The sequence spans 384 residues: tRNA(Met) cytidine acetate ligase (384 aa).

Residues 7 to 20, glycine 101, asparagine 153, and arginine 178 each bind ATP; that span reads VAEYNPFHSGHEFL.

It belongs to the TmcAL family.

The protein resides in the cytoplasm. It catalyses the reaction cytidine(34) in elongator tRNA(Met) + acetate + ATP = N(4)-acetylcytidine(34) in elongator tRNA(Met) + AMP + diphosphate. Its function is as follows. Catalyzes the formation of N(4)-acetylcytidine (ac(4)C) at the wobble position of elongator tRNA(Met), using acetate and ATP as substrates. First activates an acetate ion to form acetyladenylate (Ac-AMP) and then transfers the acetyl group to tRNA to form ac(4)C34. The protein is tRNA(Met) cytidine acetate ligase of Lactobacillus delbrueckii subsp. bulgaricus (strain ATCC BAA-365 / Lb-18).